The primary structure comprises 487 residues: NADH-quinone oxidoreductase subunit N (487 aa).

The next 14 membrane-spanning stretches (helical) occupy residues 12–32 (VLIL…LIGV), 40–60 (LTVT…IVLF), 79–99 (YMKI…VGFS), 104–124 (FDIF…MLMI), 129–149 (MLSL…LAAI), 164–184 (FVLG…LYGF), 201–221 (ILHL…AFKI), 248–268 (APKI…FIPL), 281–301 (ILIF…IGQT), 310–330 (SSIG…ILGV), 332–352 (GILI…AFIL), 378–398 (AIVM…AGFF), 411–431 (GLVP…FYYL), and 455–475 (LCLC…FWFS).

It belongs to the complex I subunit 2 family. NDH-1 is composed of 14 different subunits. Subunits NuoA, H, J, K, L, M, N constitute the membrane sector of the complex.

It is found in the cell inner membrane. It catalyses the reaction a quinone + NADH + 5 H(+)(in) = a quinol + NAD(+) + 4 H(+)(out). NDH-1 shuttles electrons from NADH, via FMN and iron-sulfur (Fe-S) centers, to quinones in the respiratory chain. The immediate electron acceptor for the enzyme in this species is believed to be ubiquinone. Couples the redox reaction to proton translocation (for every two electrons transferred, four hydrogen ions are translocated across the cytoplasmic membrane), and thus conserves the redox energy in a proton gradient. The sequence is that of NADH-quinone oxidoreductase subunit N from Bartonella bacilliformis (strain ATCC 35685 / KC583 / Herrer 020/F12,63).